The following is a 269-amino-acid chain: NAD-capped RNA hydrolase NudC (269 aa).

Residue Arg-74 participates in substrate binding. Zn(2+) is bound by residues Cys-103, Cys-106, Cys-121, and Cys-124. Residue Tyr-129 coordinates substrate. Positions 130–253 (PRIFPCIIVA…TIARQLIENT (124 aa)) constitute a Nudix hydrolase domain. Positions 163, 179, and 183 each coordinate a divalent metal cation. Positions 164–185 (GFLEVGETLEQCVAREVKEETG) match the Nudix box motif. 197 to 204 (QPWAFPSS) contributes to the substrate binding site. Residue Glu-224 coordinates a divalent metal cation. Ala-246 lines the substrate pocket.

Belongs to the Nudix hydrolase family. NudC subfamily. As to quaternary structure, homodimer. The cofactor is Mg(2+). Mn(2+) serves as cofactor. Zn(2+) is required as a cofactor.

The enzyme catalyses a 5'-end NAD(+)-phospho-ribonucleoside in mRNA + H2O = a 5'-end phospho-adenosine-phospho-ribonucleoside in mRNA + beta-nicotinamide D-ribonucleotide + 2 H(+). It catalyses the reaction NAD(+) + H2O = beta-nicotinamide D-ribonucleotide + AMP + 2 H(+). The catalysed reaction is NADH + H2O = reduced beta-nicotinamide D-ribonucleotide + AMP + 2 H(+). MRNA decapping enzyme that specifically removes the nicotinamide adenine dinucleotide (NAD) cap from a subset of mRNAs by hydrolyzing the diphosphate linkage to produce nicotinamide mononucleotide (NMN) and 5' monophosphate mRNA. The NAD-cap is present at the 5'-end of some mRNAs and stabilizes RNA against 5'-processing. Has preference for mRNAs with a 5'-end purine. Catalyzes the hydrolysis of a broad range of dinucleotide pyrophosphates. This is NAD-capped RNA hydrolase NudC from Vibrio atlanticus (strain LGP32) (Vibrio splendidus (strain Mel32)).